The sequence spans 407 residues: Vancomycin aglycone glucosyltransferase (407 aa).

Belongs to the glycosyltransferase 28 family.

The enzyme catalyses vancomycin aglycone + UDP-alpha-D-glucose = devancoaminyl-vancomycin + UDP. The protein operates within antibiotic biosynthesis; vancomycin biosynthesis. Its function is as follows. Glucosyltransferase that transfers glucose to the 4-OH-Phegly(4) residue of vancomycin aglycone (AGV) to produce devancoaminyl-vancomycin (DVV) in the biosynthesis of glycopeptide antibiotic chloroeremomycin, a member of the vancomycin group of antibiotics. This is Vancomycin aglycone glucosyltransferase (gtfB) from Amycolatopsis orientalis (Nocardia orientalis).